The chain runs to 349 residues: tRNA pseudouridine synthase D (349 aa).

A substrate-binding site is contributed by Phe-27. Asp-80 (nucleophile) is an active-site residue. Asn-129 lines the substrate pocket. Residues 155–303 enclose the TRUD domain; the sequence is GVPNYFGAQR…VEASRRAMLL (149 aa). Substrate is bound at residue Phe-329.

The protein belongs to the pseudouridine synthase TruD family.

It catalyses the reaction uridine(13) in tRNA = pseudouridine(13) in tRNA. In terms of biological role, responsible for synthesis of pseudouridine from uracil-13 in transfer RNAs. The polypeptide is tRNA pseudouridine synthase D (Salmonella dublin (strain CT_02021853)).